Reading from the N-terminus, the 272-residue chain is Tryptophan synthase alpha chain (272 aa).

Residues glutamate 49 and glutamate 60 each act as proton acceptor in the active site.

This sequence belongs to the TrpA family. In terms of assembly, tetramer of two alpha and two beta chains.

The catalysed reaction is (1S,2R)-1-C-(indol-3-yl)glycerol 3-phosphate + L-serine = D-glyceraldehyde 3-phosphate + L-tryptophan + H2O. Its pathway is amino-acid biosynthesis; L-tryptophan biosynthesis; L-tryptophan from chorismate: step 5/5. Functionally, the alpha subunit is responsible for the aldol cleavage of indoleglycerol phosphate to indole and glyceraldehyde 3-phosphate. This Legionella pneumophila (strain Corby) protein is Tryptophan synthase alpha chain.